The chain runs to 513 residues: Sphingolipid C9-methyltransferase (513 aa).

2 helical membrane passes run 52–72 and 74–94; these read ILFSILALVPGYITYKLGLGF and TWVFFFLILAIPILMAYWSIM. Residues 222-223, 259-267, 285-290, and 315-316 each bind S-adenosyl-L-methionine; these read YT, VLDIGCGWG, TLGRNQ, and YR.

This sequence belongs to the CFA/CMAS family.

It localises to the membrane. The catalysed reaction is a (4E,8E)-4-sphinga-4,8-dienine ceramide + S-adenosyl-L-methionine = a 9-methyl-(4E,8E)-sphinga-4,8-dienine ceramide + S-adenosyl-L-homocysteine + H(+). It functions in the pathway lipid metabolism; sphingolipid metabolism. Its function is as follows. Catalyzes methylation of the sphingoid base component of glucosylceramides (GluCers) at the C9-position. Sphingolipid C9-methylation requires 4,8-desaturated ceramides as substrates. Glucosylceramides play important roles in growth, differentiation and pathogenicity. The methyl group at the C9-position distinguishes fungal glucosylceramides from those of plants and animals, and may thus play a role in host-pathogen interactions enabling the host to recognize the fungal attack and initiate specific defense responses. Not necessary for vegetative growth at low temperatures, but plays a role in hyphal formation on solid medium. In Candida albicans (strain SC5314 / ATCC MYA-2876) (Yeast), this protein is Sphingolipid C9-methyltransferase.